Reading from the N-terminus, the 273-residue chain is Large ribosomal subunit protein uL2cy (273 aa).

2 disordered regions span residues 1 to 27 and 224 to 273; these read MAIH…SNPR and NPVD…RRRK.

This sequence belongs to the universal ribosomal protein uL2 family. In terms of assembly, part of the 50S ribosomal subunit.

The protein resides in the plastid. The protein localises to the chloroplast. This Liriodendron tulipifera (Tuliptree) protein is Large ribosomal subunit protein uL2cy (rpl2-B).